A 246-amino-acid chain; its full sequence is uncharacterized protein (246 aa).

This is an uncharacterized protein from Escherichia coli O157:H7.